We begin with the raw amino-acid sequence, 237 residues long: RNA chaperone ProQ (237 aa).

A disordered region spans residues 106-188 (AKARVQAQRA…QPRPVPVTDI (83 aa)). Basic and acidic residues predominate over residues 146-158 (PRREAGAAPENRK).

This sequence belongs to the ProQ family.

It localises to the cytoplasm. Its function is as follows. RNA chaperone with significant RNA binding, RNA strand exchange and RNA duplexing activities. May regulate ProP activity through an RNA-based, post-transcriptional mechanism. The chain is RNA chaperone ProQ from Yersinia pseudotuberculosis serotype O:1b (strain IP 31758).